Here is a 98-residue protein sequence, read N- to C-terminus: MSRNELDERIETYYVRVRGVVQGVGFRHATVREAHALKLRGWVANLEDGSVEAMIQGPGAQIDRMLAWLRHGPPAARVTEVTFEERLIERRFDRFQQQ.

In terms of domain architecture, Acylphosphatase-like spans 12–98; that stretch reads TYYVRVRGVV…ERRFDRFQQQ (87 aa). Residues Arg-27 and Asn-45 contribute to the active site.

Belongs to the acylphosphatase family.

The enzyme catalyses an acyl phosphate + H2O = a carboxylate + phosphate + H(+). The protein is Acylphosphatase (acyP) of Burkholderia ambifaria (strain ATCC BAA-244 / DSM 16087 / CCUG 44356 / LMG 19182 / AMMD) (Burkholderia cepacia (strain AMMD)).